The sequence spans 629 residues: 5-aminolevulinate synthase, mitochondrial (629 aa).

A mitochondrion-targeting transit peptide spans 1 to 69 (MDSVLRQSKA…VQSARTGGRA (69 aa)). Residues arginine 155, serine 268, and lysine 287 each contribute to the substrate site. Pyridoxal 5'-phosphate-binding residues include serine 320, histidine 348, and threonine 388. Residue lysine 391 is part of the active site. An N6-(pyridoxal phosphate)lysine modification is found at lysine 391. Pyridoxal 5'-phosphate-binding residues include threonine 420 and threonine 421. Threonine 506 contacts substrate.

This sequence belongs to the class-II pyridoxal-phosphate-dependent aminotransferase family. As to quaternary structure, homodimer. It depends on pyridoxal 5'-phosphate as a cofactor.

The protein localises to the mitochondrion matrix. It catalyses the reaction succinyl-CoA + glycine + H(+) = 5-aminolevulinate + CO2 + CoA. It participates in porphyrin-containing compound metabolism; protoporphyrin-IX biosynthesis; 5-aminolevulinate from glycine: step 1/1. Functionally, catalyzes the synthesis of 5-aminolevulinate (ALA) from succinyl-CoA and glycine, the first and rate-limiting step in heme biosynthesis. In Neurospora crassa (strain ATCC 24698 / 74-OR23-1A / CBS 708.71 / DSM 1257 / FGSC 987), this protein is 5-aminolevulinate synthase, mitochondrial (alv-1).